The following is a 69-amino-acid chain: Large ribosomal subunit protein uL29 (69 aa).

The protein belongs to the universal ribosomal protein uL29 family.

In Granulibacter bethesdensis (strain ATCC BAA-1260 / CGDNIH1), this protein is Large ribosomal subunit protein uL29.